Consider the following 406-residue polypeptide: Protein ALP1-like (406 aa).

Positions 8 to 15 (KKKKRAEK) match the Nuclear localization signal motif. The region spanning 187–353 (IDITHIVMNL…IIFVCCLLHN (167 aa)) is the DDE Tnp4 domain. Positions 188, 240, and 279 each coordinate a divalent metal cation.

The protein belongs to the HARBI1 family. Requires a divalent metal cation as cofactor.

It localises to the nucleus. In terms of biological role, transposase-derived protein that may have nuclease activity. The polypeptide is Protein ALP1-like (Arabidopsis thaliana (Mouse-ear cress)).